We begin with the raw amino-acid sequence, 239 residues long: Serine protease SplF (239 aa).

A signal peptide spans 1–36 (MNKNIIIKSIAALTILTSITGVGTTMVEGIQQTAKA). Active-site charge relay system residues include histidine 75, aspartate 114, and serine 192.

The protein belongs to the peptidase S1B family.

It is found in the secreted. The sequence is that of Serine protease SplF (splF) from Staphylococcus aureus (strain NCTC 8325 / PS 47).